The sequence spans 229 residues: uncharacterized protein (229 aa).

An N-terminal signal peptide occupies residues 1–26 (MSRNDARYLRCTAALGAAFFACGAAA).

The protein belongs to the OmpW/AlkL family.

It is found in the cell outer membrane. This is an uncharacterized protein from Sinorhizobium fredii (strain NBRC 101917 / NGR234).